We begin with the raw amino-acid sequence, 512 residues long: MYTSHEDIGYDLEDDRKAKNKKTLKPHPDIDGGWAWMMVLSSFFVHILIMGSQMALGVLNVEWLEEFHQSRGLTAWVSSLSMGITLIVGPFIGLFINTCGCRQTAIIGGLVNSLGWVLSAYAANVQSLFITFGVAAGLGSGMAYLPAVVMVGRYFQKRRALAQGLSTTGTGFGTFLMTVLLKYLCAEYGWRNAMFIQGALSLNLCVCGALMRPLSPEKLENCPEAEEPCALPAYSTESVKSGGPLGMAEEQDRRPGNEEMVCDLQTQECQGQTHPRKNVCAFRVLKTVSQLTVQVRRGFRDWHSGYFGTASLFTNRMFVAFIFWALFAYSSFVIPFIHLPEIVSLYNLSEQNDTFPLTSIIAILHIFGKVILGAVADLPCISVWNVFLIANFTLVLSIFLLPLMHTYASLAVICALIGFSSGYFSLMPVVTEDLVGTEHLANAYGIIICANGISALLGPPFAGWIFDITQKYDFSFYICGLLYMVGILFLLIQPCIQMIDQSRRKCIEGAHV.

Over 1–29 the chain is Cytoplasmic; sequence MYTSHEDIGYDLEDDRKAKNKKTLKPHPD. 12 helical membrane passes run 30–50, 76–96, 105–125, 129–149, 161–181, 193–211, 317–337, 355–375, 381–401, 410–430, 446–466, and 476–496; these read IDGGWAWMMVLSSFFVHILIM, WVSSLSMGITLIVGPFIGLFI, AIIGGLVNSLGWVLSAYAANV, FITFGVAAGLGSGMAYLPAVV, LAQGLSTTGTGFGTFLMTVLL, AMFIQGALSLNLCVCGALM, MFVAFIFWALFAYSSFVIPFI, FPLTSIIAILHIFGKVILGAV, ISVWNVFLIANFTLVLSIFLL, LAVICALIGFSSGYFSLMPVV, IIICANGISALLGPPFAGWIF, and FYICGLLYMVGILFLLIQPCI. The Cytoplasmic segment spans residues 497-512; sequence QMIDQSRRKCIEGAHV.

It belongs to the major facilitator superfamily. Monocarboxylate porter (TC 2.A.1.13) family.

It localises to the cell membrane. Its function is as follows. Proton-linked monocarboxylate transporter. May catalyze the transport of monocarboxylates across the plasma membrane. In Mus musculus (Mouse), this protein is Monocarboxylate transporter 14 (Slc16a14).